A 438-amino-acid chain; its full sequence is sn-glycerol-3-phosphate-binding periplasmic protein UgpB (438 aa).

A signal peptide spans 1–23 (MKPLHYTASALALGLALMGNAQA). 7 residues coordinate sn-glycerol 3-phosphate: Tyr-65, Glu-89, Ser-144, Ser-270, Gly-307, Tyr-346, and Arg-397.

This sequence belongs to the bacterial solute-binding protein 1 family. In terms of assembly, the complex is composed of two ATP-binding proteins (UgpC), two transmembrane proteins (UgpA and UgpE) and a solute-binding protein (UgpB).

It localises to the periplasm. Functionally, part of the ABC transporter complex UgpBAEC involved in sn-glycerol-3-phosphate (G3P) import. Binds G3P. The polypeptide is sn-glycerol-3-phosphate-binding periplasmic protein UgpB (ugpB) (Shigella flexneri serotype 5b (strain 8401)).